The following is a 919-amino-acid chain: Glutamate receptor ionotropic, kainate 3 (919 aa).

The N-terminal stretch at 1–31 is a signal peptide; the sequence is MTAPWRRLRSLVWEYWAGFLVCAFWIPDSRG. At 32 to 563 the chain is on the extracellular side; it reads MPHVIRIGGI…VFSFLNPLSP (532 aa). N-linked (GlcNAc...) asparagine glycans are attached at residues Asn70, Asn76, Asn278, Asn381, Asn415, Asn426, and Asn433. Cys99 and Cys350 are joined by a disulfide. The L-glutamate site is built by Pro518, Thr520, and Arg525. Residues Asn548 and Asn551 are each glycosylated (N-linked (GlcNAc...) asparagine). A helical membrane pass occupies residues 564-584; sequence DIWMYVLLAYLGVSCVLFVIA. Residues 585–636 are Cytoplasmic-facing; sequence RFSPYEWYDAHPCNPGSEVVENNFTLLNSFWFGMGSLMQQGSELMPKALSTR. Residues 637 to 657 form a helical membrane-spanning segment; the sequence is IIGGIWWFFTLIIISSYTANL. Residues 658–820 lie on the Extracellular side of the membrane; sequence AAFLTVERME…KEASALGIQK (163 aa). Residues Ala691, Thr692, and Glu739 each coordinate L-glutamate. Residue Asn752 is glycosylated (N-linked (GlcNAc...) asparagine). A helical membrane pass occupies residues 821–841; sequence IGGIFIVLAAGLVLSVLVAVG. At 842-919 the chain is on the cytoplasmic side; that stretch reads EFIYKLRKTA…CSTSLAPVFP (78 aa). Phosphoserine is present on Ser869. Lys887 participates in a covalent cross-link: Glycyl lysine isopeptide (Lys-Gly) (interchain with G-Cter in SUMO1).

It belongs to the glutamate-gated ion channel (TC 1.A.10.1) family. GRIK3 subfamily. In terms of assembly, homotetramer, and heterotetramer with GRIK4 or GRIK5. Can form functional heteromeric receptors with GRIK2. Interacts with PRKCABP. Interacts with NETO2. As to quaternary structure, homomeric GluR7A forms functional kainate receptors which have very low sensitivity to glutamate. Can form functional heteromeric receptors with GRIK4 and GRIK5. Homomeric GluR7B forms functional kainate receptors. Mass spectrometry data suggest the protein is N-glycosylated at five distinct sites. In terms of tissue distribution, expressed in the olfactory bulb (at protein level). Expressed in the deep cortical layers, dentate gyrus, reticular thalamic nucleus, mammillary bodies, pons, and cerebellum of the adult.

It is found in the cell membrane. It localises to the postsynaptic cell membrane. It carries out the reaction Ca(2+)(in) = Ca(2+)(out). Ionotropic glutamate receptor that functions as a cation-permeable ligand-gated ion channel, gated by L-glutamate and the glutamatergic agonist kainic acid. Binding of the excitatory neurotransmitter L-glutamate induces a conformation change, leading to the opening of the cation channel, and thereby converts the chemical signal to an electrical impulse. The receptor then desensitizes rapidly and enters a transient inactive state, characterized by the presence of bound agonist. In association with GRIK2, involved in presynaptic facilitation of glutamate release at hippocampal mossy fiber synapses. Its function is as follows. Ionotropic glutamate receptor that functions as a ligand-gated cation channel, gated by L-glutamate and the glutamatergic agonist kainic acid. The protein is Glutamate receptor ionotropic, kainate 3 (Grik3) of Rattus norvegicus (Rat).